We begin with the raw amino-acid sequence, 781 residues long: MSLPKTANGMDKLKLCYLLLFYLGSSSLTEVSGAQTCEIDSVLCTSDLSEPDDPPIFHDLTTKEIKSVQTYLYHQRDLRLLRPGLAKINTSFIQGMELYLPNKKDVIHYLQSKVPTPKPPRAAVVTIFRGDCDPAVVEEYIVFPLPWPTQHRLHRKVPYYLRPFNDVEFATISDFLTKQVDGVLRQFLEESFGGRLINCGNRCLNFQFASPVGPSVSNEPGARKSWYWLHQLVEYSALHPVDFAVLMKIVGCVYTIEKVYFNNMYFNSLQEVALHYRNPSFPRLRIPYPVDSKQLFSKMERRGILFPEKPVSPPRQVEPEGKRYSVKYQEVKYMNWKFNFRLSPGLGPRLHNIRYHDRLIVYELALQDIVVFYSGAEPPHQYANFFDSSYMIGMNLQGMVPGVDCPTGATFIDSHILTESSLKPAKLINAFCVFEQNTGDFLRRHISKTSPDGPFYEGVPSIVLVLRAITTIANYDYTIDFIFHHNGVLQTKVVPTGYILPSLYTKQNENKYGFRLNNKLIGNLHHHLFNFKVDIDINGQHNRYETLDIVLDKTSHPVSKKPYDVWYQNKIKHNLRKTEMEALFKYDFDKPMHHIFYNNNLKSPEGNNMAYRLVNRGMSKSLLPECSGNEGTGAWMRHQIAVTKRKETELTSSSVYSAFGTKNPVVNFRNFYADNENIVDEDLVAWVTMGTYHIPHTEDLPVTHTPGLDLSFFLSPFNYFPEDPAMGSRDSVRIEAVDKNNLKRGIKIDKQTFPEKMTCKAPIGNYFEYILKRPNVIFDIQ.

The first 34 residues, 1–34 (MSLPKTANGMDKLKLCYLLLFYLGSSSLTEVSGA), serve as a signal peptide directing secretion. A disulfide bridge connects residues Cys199 and Cys203. 385–395 (FFDSSYMIGMN) lines the substrate pocket. Residue Asp387 is the Proton acceptor of the active site. A disulfide bond links Cys405 and Cys432. Residue 472 to 477 (IANYDY) coordinates substrate. The active-site Schiff-base intermediate with substrate; via topaquinone is the Tyr475. At Tyr475 the chain carries 2',4',5'-topaquinone. Positions 525 and 527 each coordinate Cu cation. Ca(2+) contacts are provided by Asp534, Asp536, Glu579, Phe671, Asp674, Glu676, Asp682, and Leu683. 2 residues coordinate Mn(2+): Asp534 and Asp536. Mn(2+) is bound at residue Asp682. His693 serves as a coordination point for Cu cation.

It belongs to the copper/topaquinone oxidase family. As to quaternary structure, homodimer. It depends on Cu cation as a cofactor. Ca(2+) is required as a cofactor. Requires L-topaquinone as cofactor. Mn(2+) serves as cofactor. Topaquinone (TPQ) is generated by copper-dependent autoxidation of a specific tyrosyl residue. In terms of tissue distribution, prismatic layer of shell (at protein level). Expressed primarily in the mantle with highest level in the mantle edge and lower level in the mantle pallium.

The protein localises to the secreted. This Margaritifera margaritifera (Freshwater pearl mussel) protein is Putative amine oxidase [copper-containing].